The sequence spans 197 residues: dITP/XTP pyrophosphatase (197 aa).

8 to 13 (TKNKGK) contributes to the substrate binding site. Mg(2+) is bound by residues glutamate 42 and aspartate 71. The active-site Proton acceptor is aspartate 71. Residues serine 72, 154 to 157 (FGYD), lysine 177, and 182 to 183 (HR) contribute to the substrate site.

The protein belongs to the HAM1 NTPase family. In terms of assembly, homodimer. Mg(2+) is required as a cofactor.

The catalysed reaction is XTP + H2O = XMP + diphosphate + H(+). It catalyses the reaction dITP + H2O = dIMP + diphosphate + H(+). It carries out the reaction ITP + H2O = IMP + diphosphate + H(+). Its function is as follows. Pyrophosphatase that catalyzes the hydrolysis of nucleoside triphosphates to their monophosphate derivatives, with a high preference for the non-canonical purine nucleotides XTP (xanthosine triphosphate), dITP (deoxyinosine triphosphate) and ITP. Seems to function as a house-cleaning enzyme that removes non-canonical purine nucleotides from the nucleotide pool, thus preventing their incorporation into DNA/RNA and avoiding chromosomal lesions. The chain is dITP/XTP pyrophosphatase from Oceanobacillus iheyensis (strain DSM 14371 / CIP 107618 / JCM 11309 / KCTC 3954 / HTE831).